The chain runs to 529 residues: MEHRIVGPGPYRATRLWNETVELFRAKMPLRKHRCRFKSYEHCFTAAEAVDWLHELLRCSQNFGPEVTRKQTVQLLKKFLKNHVIEDIKGKWGEEDFEDNRHLYRFPPSSPLKPYPKKPPNQKDVIKFPEWNDLPPGTSQENIPVRPVVMNSEMWYKRHSIAIGEVPACRLVHRRQLTEANVEEIWKSMTLSYLQKILGLDSLEEVLDVKLVNSKFIIHNVYSVSKQGVVILDDKSKELPHWVLSAMKCLANWPNCSDLKQPMYLGFEKDVFKTIADYYGHLKEPLLTFHLFDAFVSVLGLLQKEKVAVEAFQICCLLLPPENRRKLQLLMRMMARICLNKEMPPLCDGFGTRTLMVQTFSRCILCSKDEVDLDELLAARLVTFLMDNYQEILKVPLALQTSIEERVAHLRRVQIKYPGADMDITLSAPSFCRQISPEEFEYQRSYGSQEPLAALLEEVITDAKLSNKEKKKKLKQFQKSYPEVYQERFPTPESAALLFPEKPKPKPQLLMWALKKPFQPFQRTRSFRM.

In terms of domain architecture, DEP spans 24–108 (FRAKMPLRKH…DNRHLYRFPP (85 aa)). Position 160 is a phosphoserine (Ser-160). The region spanning 201–393 (DSLEEVLDVK…FLMDNYQEIL (193 aa)) is the Rho-GAP domain. At Ser-436 the chain carries Phosphoserine.

This is DEP domain-containing protein 1B (DEPDC1B) from Homo sapiens (Human).